The following is a 323-amino-acid chain: tRNA U34 carboxymethyltransferase (323 aa).

Carboxy-S-adenosyl-L-methionine contacts are provided by residues K91, W105, K110, G130, 152 to 154 (DPT), 181 to 182 (IE), M196, Y200, and R315.

The protein belongs to the class I-like SAM-binding methyltransferase superfamily. CmoB family. Homotetramer.

The catalysed reaction is carboxy-S-adenosyl-L-methionine + 5-hydroxyuridine(34) in tRNA = 5-carboxymethoxyuridine(34) in tRNA + S-adenosyl-L-homocysteine + H(+). Functionally, catalyzes carboxymethyl transfer from carboxy-S-adenosyl-L-methionine (Cx-SAM) to 5-hydroxyuridine (ho5U) to form 5-carboxymethoxyuridine (cmo5U) at position 34 in tRNAs. This Escherichia coli O7:K1 (strain IAI39 / ExPEC) protein is tRNA U34 carboxymethyltransferase.